Reading from the N-terminus, the 357-residue chain is Acyl-CoA Delta12-desaturase (357 aa).

Helical transmembrane passes span 49–69 and 72–92; these read VLWF…IFAS and IYTT…ITAG. Fe cation contacts are provided by His94, His99, His131, His134, and His135. The short motif at 94–99 is the Histidine box-1 element; the sequence is HRLWAH. Residues 131 to 135 carry the Histidine box-2 motif; that stretch reads HRVHH. The next 2 membrane-spanning stretches (helical) occupy residues 195 to 215 and 223 to 245; these read LVPF…WGET and STMF…AHMW. Fe cation-binding residues include His243, His272, His275, and His276. The Histidine box-3 signature appears at 272-276; it reads HNFHH.

It belongs to the fatty acid desaturase type 1 family. The cofactor is Fe(2+).

Its subcellular location is the membrane. It carries out the reaction (9Z)-octadecenoyl-CoA + 2 Fe(II)-[cytochrome b5] + O2 + 2 H(+) = (9Z,12Z)-octadecadienoyl-CoA + 2 Fe(III)-[cytochrome b5] + 2 H2O. It catalyses the reaction (9Z)-hexadecenoyl-CoA + 2 Fe(II)-[cytochrome b5] + O2 + 2 H(+) = (9Z,12Z)-hexadecadienoyl-CoA + 2 Fe(III)-[cytochrome b5] + 2 H2O. The enzyme catalyses hexadecanoyl-CoA + 2 Fe(II)-[cytochrome b5] + O2 + 2 H(+) = (9Z)-hexadecenoyl-CoA + 2 Fe(III)-[cytochrome b5] + 2 H2O. Functionally, catalyzes the formation of a Delta12 double bond, acting on monounsaturated fatty acyl substrates like palmitoleoyl-CoA ((9Z)-hexadecenoyl-CoA) and oleoyl-CoA ((9Z)-octadecenoyl-CoA) with higher desaturation activity on (9Z)-octadecenoyl-CoA than (9Z)-hexadecenoyl-CoA. Requires preexisting cis double bond at the Delta9 position of fatty acyls to be able to insert the Delta12 double bond. Delta12-desaturation of (9Z)-octadecenoyl-CoA in insects produces (9Z,12Z)-octadecadienoyl-CoA (linoleoyl-CoA) which may be used to supply precursors of crucial mediators of immunity and reproduction and other essential functions. Can also catalyze Delta9-desaturation on saturated fatty acyl substrates like palmitoyl-CoA (hexadecanoyl-CoA) but with lower efficiency. This Acheta domesticus (House cricket) protein is Acyl-CoA Delta12-desaturase.